The primary structure comprises 217 residues: tRNA (guanine-N(7)-)-methyltransferase (217 aa).

S-adenosyl-L-methionine is bound by residues Glu-48, Glu-73, Asn-100, and Asp-123. Asp-123 is an active-site residue. Lys-127 and Asp-159 together coordinate substrate.

This sequence belongs to the class I-like SAM-binding methyltransferase superfamily. TrmB family.

It carries out the reaction guanosine(46) in tRNA + S-adenosyl-L-methionine = N(7)-methylguanosine(46) in tRNA + S-adenosyl-L-homocysteine. Its pathway is tRNA modification; N(7)-methylguanine-tRNA biosynthesis. Catalyzes the formation of N(7)-methylguanine at position 46 (m7G46) in tRNA. This chain is tRNA (guanine-N(7)-)-methyltransferase, found in Leptospira borgpetersenii serovar Hardjo-bovis (strain JB197).